Here is a 789-residue protein sequence, read N- to C-terminus: Glycerol-3-phosphate acyltransferase (789 aa).

The HXXXXD motif signature appears at 276–281 (HRSYID).

Belongs to the GPAT/DAPAT family.

The protein localises to the cell membrane. It carries out the reaction sn-glycerol 3-phosphate + an acyl-CoA = a 1-acyl-sn-glycero-3-phosphate + CoA. Its pathway is phospholipid metabolism; CDP-diacylglycerol biosynthesis; CDP-diacylglycerol from sn-glycerol 3-phosphate: step 1/3. The protein is Glycerol-3-phosphate acyltransferase of Mycobacterium bovis (strain ATCC BAA-935 / AF2122/97).